The sequence spans 232 residues: Ribonuclease 3 (232 aa).

Residues 5 to 134 form the RNase III domain; sequence QTVLKNHFEI…FLGALLLDKD (130 aa). Glu47 serves as a coordination point for Mg(2+). Asp51 is a catalytic residue. The Mg(2+) site is built by Asp120 and Glu123. Glu123 is an active-site residue. One can recognise a DRBM domain in the interval 160–229; sequence DYKTHLQELL…AKNAVEKGLD (70 aa).

This sequence belongs to the ribonuclease III family. As to quaternary structure, homodimer. Mg(2+) serves as cofactor.

The protein resides in the cytoplasm. The enzyme catalyses Endonucleolytic cleavage to 5'-phosphomonoester.. Digests double-stranded RNA. Involved in the processing of primary rRNA transcript to yield the immediate precursors to the large and small rRNAs (23S and 16S). Processes some mRNAs, and tRNAs when they are encoded in the rRNA operon. Processes pre-crRNA and tracrRNA of type II CRISPR loci if present in the organism. The polypeptide is Ribonuclease 3 (Streptococcus pneumoniae (strain ATCC BAA-255 / R6)).